A 241-amino-acid chain; its full sequence is Glucosamine-6-phosphate deaminase (241 aa).

D67 acts as the Proton acceptor; for enolization step in catalysis. N136 functions as the For ring-opening step in the catalytic mechanism. Catalysis depends on H138, which acts as the Proton acceptor; for ring-opening step. E143 functions as the For ring-opening step in the catalytic mechanism.

It belongs to the glucosamine/galactosamine-6-phosphate isomerase family. NagB subfamily.

It catalyses the reaction alpha-D-glucosamine 6-phosphate + H2O = beta-D-fructose 6-phosphate + NH4(+). It functions in the pathway amino-sugar metabolism; N-acetylneuraminate degradation; D-fructose 6-phosphate from N-acetylneuraminate: step 5/5. Its function is as follows. Catalyzes the reversible isomerization-deamination of glucosamine 6-phosphate (GlcN6P) to form fructose 6-phosphate (Fru6P) and ammonium ion. This is Glucosamine-6-phosphate deaminase from Clostridium novyi (strain NT).